The sequence spans 252 residues: Neurexophilin-3 (252 aa).

A signal peptide spans 1-22 (MQLTRCCFVFLVQGSLYLVICG). The tract at residues 23–75 (QEDGPPGSEDPEHDDHEGQPRPRVPRKRGHISPKSRPLANSTLLGLLAPPGEV) is II. The segment at 27–59 (PPGSEDPEHDDHEGQPRPRVPRKRGHISPKSRP) is disordered. A compositionally biased stretch (basic residues) spans 45-55 (RVPRKRGHISP). 4 N-linked (GlcNAc...) asparagine glycosylation sites follow: Asn62, Asn127, Asn137, and Asn143. The III stretch occupies residues 76–157 (WGILGQPPNR…LVPPSKAVEF (82 aa)). Residues 158-166 (HQEQQIFIE) are IV (linker domain). Residues 167-252 (AKASKIFNCR…HSDTPYYPSG (86 aa)) form a v (Cys-rich) region.

The protein belongs to the neurexophilin family. In terms of processing, may be proteolytically processed at the boundary between the N-terminal non-conserved and the central conserved domain in neuron-like cells. In terms of tissue distribution, brain. Detected in several other tissues.

It localises to the secreted. Functionally, may be signaling molecules that resemble neuropeptides. Ligand for alpha-neurexins. The protein is Neurexophilin-3 (Nxph3) of Rattus norvegicus (Rat).